Consider the following 1167-residue polypeptide: Carbamoyl phosphate synthase large chain (1167 aa).

The segment at 1–455 (MPRRTDIKSI…SLQKALRGLE (455 aa)) is carboxyphosphate synthetic domain. ATP-binding residues include arginine 129, arginine 221, glycine 227, glycine 228, glutamate 260, valine 262, glutamate 267, glycine 293, valine 294, histidine 295, glutamine 337, and glutamate 351. The ATP-grasp 1 domain occupies 184 to 380 (LETRWNLGEG…IAKIAAKLAV (197 aa)). Positions 337, 351, and 353 each coordinate Mg(2+). Glutamine 337, glutamate 351, and asparagine 353 together coordinate Mn(2+). The tract at residues 456-619 (TGLTGLDEIE…PFAGALANEA (164 aa)) is oligomerization domain. The interval 620–1031 (QVSSRKKVVI…AFAKSQLGAG (412 aa)) is carbamoyl phosphate synthetic domain. An ATP-grasp 2 domain is found at 748–960 (QKLLHKLGLS…IAKIAARIMA (213 aa)). Residues arginine 784, threonine 844, leucine 846, glutamate 851, glycine 876, isoleucine 877, histidine 878, serine 879, glutamine 919, and glutamate 931 each coordinate ATP. The Mg(2+) site is built by glutamine 919, glutamate 931, and asparagine 933. Residues glutamine 919, glutamate 931, and asparagine 933 each contribute to the Mn(2+) site. The 136-residue stretch at 1032–1167 (VDLPRSGTLF…EVRPLQEYFA (136 aa)) folds into the MGS-like domain. Residues 1032 to 1167 (VDLPRSGTLF…EVRPLQEYFA (136 aa)) are allosteric domain.

This sequence belongs to the CarB family. In terms of assembly, composed of two chains; the small (or glutamine) chain promotes the hydrolysis of glutamine to ammonia, which is used by the large (or ammonia) chain to synthesize carbamoyl phosphate. Tetramer of heterodimers (alpha,beta)4. It depends on Mg(2+) as a cofactor. Mn(2+) serves as cofactor.

It carries out the reaction hydrogencarbonate + L-glutamine + 2 ATP + H2O = carbamoyl phosphate + L-glutamate + 2 ADP + phosphate + 2 H(+). The catalysed reaction is hydrogencarbonate + NH4(+) + 2 ATP = carbamoyl phosphate + 2 ADP + phosphate + 2 H(+). It participates in amino-acid biosynthesis; L-arginine biosynthesis; carbamoyl phosphate from bicarbonate: step 1/1. It functions in the pathway pyrimidine metabolism; UMP biosynthesis via de novo pathway; (S)-dihydroorotate from bicarbonate: step 1/3. Its function is as follows. Large subunit of the glutamine-dependent carbamoyl phosphate synthetase (CPSase). CPSase catalyzes the formation of carbamoyl phosphate from the ammonia moiety of glutamine, carbonate, and phosphate donated by ATP, constituting the first step of 2 biosynthetic pathways, one leading to arginine and/or urea and the other to pyrimidine nucleotides. The large subunit (synthetase) binds the substrates ammonia (free or transferred from glutamine from the small subunit), hydrogencarbonate and ATP and carries out an ATP-coupled ligase reaction, activating hydrogencarbonate by forming carboxy phosphate which reacts with ammonia to form carbamoyl phosphate. This chain is Carbamoyl phosphate synthase large chain, found in Mesorhizobium japonicum (strain LMG 29417 / CECT 9101 / MAFF 303099) (Mesorhizobium loti (strain MAFF 303099)).